Reading from the N-terminus, the 364-residue chain is Aminomethyltransferase (364 aa).

The protein belongs to the GcvT family. As to quaternary structure, the glycine cleavage system is composed of four proteins: P, T, L and H.

It carries out the reaction N(6)-[(R)-S(8)-aminomethyldihydrolipoyl]-L-lysyl-[protein] + (6S)-5,6,7,8-tetrahydrofolate = N(6)-[(R)-dihydrolipoyl]-L-lysyl-[protein] + (6R)-5,10-methylene-5,6,7,8-tetrahydrofolate + NH4(+). Its function is as follows. The glycine cleavage system catalyzes the degradation of glycine. The protein is Aminomethyltransferase of Bacillus licheniformis (strain ATCC 14580 / DSM 13 / JCM 2505 / CCUG 7422 / NBRC 12200 / NCIMB 9375 / NCTC 10341 / NRRL NRS-1264 / Gibson 46).